The chain runs to 431 residues: Argininosuccinate lyase (431 aa).

Belongs to the lyase 1 family. Argininosuccinate lyase subfamily.

It localises to the cytoplasm. The enzyme catalyses 2-(N(omega)-L-arginino)succinate = fumarate + L-arginine. The protein operates within amino-acid biosynthesis; L-arginine biosynthesis; L-arginine from L-ornithine and carbamoyl phosphate: step 3/3. The chain is Argininosuccinate lyase from Xanthomonas campestris pv. campestris (strain B100).